The primary structure comprises 228 residues: Protein boule (228 aa).

The region spanning 33–110 (NRIFVGGISG…RKLNIAPAIK (78 aa)) is the RRM domain. A DAZ domain is found at 151–178 (PAAGVPAIYPPSAMQYQPFYQYYSVPMN). A compositionally biased stretch (low complexity) spans 193–214 (PLLHSPTSNPHSPHSQSHPQSP). A disordered region spans residues 193–228 (PLLHSPTSNPHSPHSQSHPQSPCWSIEDLRDTLPRV). A compositionally biased stretch (basic and acidic residues) spans 219 to 228 (EDLRDTLPRV).

Belongs to the RRM DAZ family. As to quaternary structure, interacts with the translational regulator orb2. Testis specific.

The protein localises to the nucleus. The protein resides in the cytoplasm. RNA-binding protein that plays a central role in spermatogenesis. Required for meiotic entry and germline differentiation, at the transition between G2 and M phases of meiosis I. Acts by regulating translation of specific mRNAs, possibly by binding to their 3'-UTR. Essential for translation of twine (twe) mRNA. Required for the expression of various genes such as CG6784, CG17210, CG15841 scpr-B, scpr-C, and rho-6. In Drosophila melanogaster (Fruit fly), this protein is Protein boule (bol).